Here is a 147-residue protein sequence, read N- to C-terminus: Prefoldin subunit alpha (147 aa).

It belongs to the prefoldin alpha subunit family. As to quaternary structure, heterohexamer of two alpha and four beta subunits.

The protein resides in the cytoplasm. Functionally, molecular chaperone capable of stabilizing a range of proteins. Seems to fulfill an ATP-independent, HSP70-like function in archaeal de novo protein folding. The polypeptide is Prefoldin subunit alpha (Thermococcus onnurineus (strain NA1)).